A 52-amino-acid polypeptide reads, in one-letter code: MAVPKKRTSISKKRIRKKIWKRKGYWTSLKAFSLGKSLSTGNSKSFFVQQNK.

This sequence belongs to the bacterial ribosomal protein bL32 family.

It is found in the plastid. The protein resides in the chloroplast. This chain is Large ribosomal subunit protein bL32c, found in Olimarabidopsis pumila (Dwarf rocket).